A 172-amino-acid chain; its full sequence is Stellate orphon protein at 12D (172 aa).

The protein belongs to the casein kinase 2 subunit beta family. In terms of assembly, interacts in vitro with the casein kinase 2 alpha subunit (CkII-alpha). The relevance of such interaction is however unclear in vivo. Probably not expressed in wild-type flies. In males lacking the Y chromosome, it is testis-specific and constitutes the main component of star-shaped crystals.

Unknown. In males lacking the Y chromosome, its strong overexpression leads to the appearance of proteinaceous star-shaped crystals in the primary spermatocytes causing meiotic drive, possibly by interfering with normal casein kinase 2 activity. This chain is Stellate orphon protein at 12D (Ste12DOR), found in Drosophila melanogaster (Fruit fly).